We begin with the raw amino-acid sequence, 339 residues long: DNA repair protein RAD51 homolog 1 (339 aa).

The disordered stretch occupies residues 1 to 23 (MAMQVQFEASTDTSAEEESFGPE). Residues 48–77 (TVESVAHAPKKELLNIKGISEAKADKILAE) form the HhH domain. Residue 127–134 (GEFRTGKT) coordinates ATP.

Belongs to the RecA family. RAD51 subfamily. Forms linear homooligomers, giving rise to a RAD51 nucleoprotein filament, which is essential for strand-pairing reactions during DNA recombination. Expressed at high levels in lymphoid and reproductive organs.

The protein localises to the nucleus. Its subcellular location is the cytoplasm. It is found in the chromosome. In terms of biological role, plays an important role in homologous strand exchange, a key step in DNA repair through homologous recombination (HR). Binds to single-stranded DNA in an ATP-dependent manner to form nucleoprotein filaments which are essential for the homology search and strand exchange. Catalyzes the recognition of homology and strand exchange between homologous DNA partners to form a joint molecule between a processed DNA break and the repair template. Recruited to resolve stalled replication forks during replication stress. Also involved in interstrand cross-link repair. The polypeptide is DNA repair protein RAD51 homolog 1 (RAD51A) (Gallus gallus (Chicken)).